Consider the following 99-residue polypeptide: MELKHVLMIIGIIILTIAPLVMYSGLTEEDGYFGGADGAASDLIMELSPEYEPWFEPFWEPPSGEIESLLFALQAAIGAIIIGYFFGYNKAKYDFESKN.

2 helical membrane-spanning segments follow: residues 6–26 and 68–88; these read VLMIIGIIILTIAPLVMYSGL and SLLFALQAAIGAIIIGYFFGY.

It belongs to the CbiN family. In terms of assembly, forms an energy-coupling factor (ECF) transporter complex composed of an ATP-binding protein (A component, CbiO), a transmembrane protein (T component, CbiQ) and 2 possible substrate-capture proteins (S components, CbiM and CbiN) of unknown stoichimetry.

It localises to the cell membrane. The protein operates within cofactor biosynthesis; adenosylcobalamin biosynthesis. Functionally, part of the energy-coupling factor (ECF) transporter complex CbiMNOQ involved in cobalt import. This Methanococcus vannielii (strain ATCC 35089 / DSM 1224 / JCM 13029 / OCM 148 / SB) protein is Cobalt transport protein CbiN.